The chain runs to 611 residues: UvrABC system protein C (611 aa).

A GIY-YIG domain is found at 14-91 (TSPGCYIHKD…IKENQPKYNI (78 aa)). The UVR domain occupies 196-231 (DQIIEDLRGKMAGAAQAMEFEKAAEYRDLIQSIGTL). Positions 587-611 (KLNPKTQEQEQAQLREVAEPQIGLE) are disordered.

This sequence belongs to the UvrC family. In terms of assembly, interacts with UvrB in an incision complex.

It localises to the cytoplasm. In terms of biological role, the UvrABC repair system catalyzes the recognition and processing of DNA lesions. UvrC both incises the 5' and 3' sides of the lesion. The N-terminal half is responsible for the 3' incision and the C-terminal half is responsible for the 5' incision. This chain is UvrABC system protein C, found in Streptococcus sanguinis (strain SK36).